Reading from the N-terminus, the 220-residue chain is ATP-dependent Clp protease proteolytic subunit 1 (220 aa).

Catalysis depends on serine 118, which acts as the Nucleophile. The active site involves histidine 143.

It belongs to the peptidase S14 family. Fourteen ClpP subunits assemble into 2 heptameric rings which stack back to back to give a disk-like structure with a central cavity, resembling the structure of eukaryotic proteasomes.

The protein localises to the cytoplasm. It catalyses the reaction Hydrolysis of proteins to small peptides in the presence of ATP and magnesium. alpha-casein is the usual test substrate. In the absence of ATP, only oligopeptides shorter than five residues are hydrolyzed (such as succinyl-Leu-Tyr-|-NHMec, and Leu-Tyr-Leu-|-Tyr-Trp, in which cleavage of the -Tyr-|-Leu- and -Tyr-|-Trp bonds also occurs).. In terms of biological role, cleaves peptides in various proteins in a process that requires ATP hydrolysis. Has a chymotrypsin-like activity. Plays a major role in the degradation of misfolded proteins. The protein is ATP-dependent Clp protease proteolytic subunit 1 of Rhodococcus jostii (strain RHA1).